The following is a 288-amino-acid chain: Protein PGR (288 aa).

The next 7 membrane-spanning stretches (helical) occupy residues 1–21 (METSPQFRLIFAVIISSLIAF), 29–49 (LDLSGGIAGFLVMTIHFTAGF), 91–111 (VLCNSGIASVLVVIACTLTGW), 123–143 (IVTALIGGIIGHYACCNGDTW), 177–197 (LLAALAAGTTVGLTFLIFGLF), 210–230 (LLVIPLSALAGLCGSLIDSIL), and 268–288 (VNFVSILLTSFLTSIASVYIF).

This sequence belongs to the TMEM19 family. Expressed in the vasculature of leaves, roots, inflorescences, siliques, anther filaments and sepals. Detected primarily in the phloem tissues, including in the root ans shoot apical meristems.

It localises to the cell membrane. Involved in the glucose-triggered developmental leaf growth process. The chain is Protein PGR from Arabidopsis thaliana (Mouse-ear cress).